We begin with the raw amino-acid sequence, 908 residues long: Probable disease resistance RPP8-like protein 4 (908 aa).

Residues Asp15–Arg57 are a coiled coil. The NB-ARC domain maps to Arg146–Ile459. Residue Gly192–Thr199 participates in ATP binding. 3 LRR repeats span residues Leu575–Gly599, Leu600–Leu623, and Met842–Thr867.

Belongs to the disease resistance NB-LRR family. RPP8/HRT subfamily.

Its function is as follows. Potential disease resistance protein. This Arabidopsis thaliana (Mouse-ear cress) protein is Probable disease resistance RPP8-like protein 4 (RPP8L4).